The chain runs to 84 residues: Acyl carrier protein MbtL (84 aa).

A Carrier domain is found at 6–81 (STVSTTLLSI…ELEAAIAAKY (76 aa)). Ser-41 carries the post-translational modification O-(pantetheine 4'-phosphoryl)serine.

4'-phosphopantetheine is transferred from CoA to a specific serine of apo-ACP, leading to the activated holo-ACP form.

The protein localises to the cytoplasm. The protein operates within siderophore biosynthesis; mycobactin biosynthesis. Its function is as follows. Acyl carrier protein involved in the formation of acyl-S-ACP intermediates within the mycobactin biosynthesis process. The aliphatic chains carried by ACP are subsequently transferred on to the mycobactin core by MbtK. In Mycobacterium bovis (strain ATCC BAA-935 / AF2122/97), this protein is Acyl carrier protein MbtL (mbtL).